The primary structure comprises 165 residues: MMEEIDRFQVPTAHSEMQPLDPTAASISDGDCDAREEKQRELARKGSLKNGSMGSPVNQQPKKNNVMARTRLVVPNKGYSSLDQSPDEKPLVALDTDSDDDFDMSRYSSSGYSSAEQINQDLNIQLLKDGYRLDEIPDDEDLDLIPPSQVSPCSLIYFQEGVWKT.

Met-1 carries the N-acetylmethionine modification. Residues 1–114 (MMEEIDRFQV…SRYSSSGYSS (114 aa)) are disordered. Positions 32–44 (CDAREEKQRELAR) are enriched in basic and acidic residues. Positions 49-63 (KNGSMGSPVNQQPKK) are enriched in polar residues. Ser-55 and Ser-85 each carry phosphoserine. The residue at position 96 (Thr-96) is a Phosphothreonine. 2 positions are modified to phosphoserine: Ser-98 and Ser-105. Low complexity predominate over residues 105-114 (SRYSSSGYSS).

Belongs to the FAM219 family.

This is Protein FAM219A (FAM219A) from Macaca fascicularis (Crab-eating macaque).